We begin with the raw amino-acid sequence, 227 residues long: uncharacterized protein (227 aa).

7 helical membrane-spanning segments follow: residues 15 to 34, 55 to 77, 92 to 114, 121 to 140, 145 to 167, 180 to 202, and 206 to 224; these read FIAA…FLIY, TFLF…ASGV, AFSM…YSLL, FPGE…TSLL, LVFL…VNYS, PLYI…FLPL, and FAIY…YRVL.

It is found in the cell membrane. This is an uncharacterized protein from Archaeoglobus fulgidus (strain ATCC 49558 / DSM 4304 / JCM 9628 / NBRC 100126 / VC-16).